Consider the following 96-residue polypeptide: Ubiquitin-related modifier 1 (96 aa).

A 1-thioglycine modification is found at Gly-96. A Glycyl lysine isopeptide (Gly-Lys) (interchain with K-? in acceptor proteins) cross-link involves residue Gly-96.

It belongs to the URM1 family. Post-translationally, C-terminal thiocarboxylation occurs in 2 steps, it is first acyl-adenylated (-COAMP) via the hesA/moeB/thiF part of UBA4, then thiocarboxylated (-COSH) via the rhodanese domain of UBA4.

The protein localises to the cytoplasm. It functions in the pathway tRNA modification; 5-methoxycarbonylmethyl-2-thiouridine-tRNA biosynthesis. Its function is as follows. Acts as a sulfur carrier required for 2-thiolation of mcm(5)S(2)U at tRNA wobble positions of cytosolic tRNA(Lys), tRNA(Glu) and tRNA(Gln). Serves as sulfur donor in tRNA 2-thiolation reaction by being thiocarboxylated (-COSH) at its C-terminus by the MOCS3 homolog UBA4. The sulfur is then transferred to tRNA to form 2-thiolation of mcm(5)S(2)U. Prior mcm(5) tRNA modification by the elongator complex is required for 2-thiolation. Also acts as a ubiquitin-like protein (UBL) that is covalently conjugated via an isopeptide bond to lysine residues of target proteins such as AHP1. The thiocarboxylated form serves as substrate for conjugation and oxidative stress specifically induces the formation of UBL-protein conjugates. The chain is Ubiquitin-related modifier 1 from Encephalitozoon cuniculi (strain GB-M1) (Microsporidian parasite).